A 91-amino-acid chain; its full sequence is Succinate dehydrogenase assembly factor 1A, mitochondrial (91 aa).

This sequence belongs to the complex I LYR family. SDHAF1 subfamily. In terms of assembly, interacts with the iron-sulfur protein subunit within the SDH catalytic dimer.

Its subcellular location is the mitochondrion matrix. Functionally, plays an essential role in the assembly of succinate dehydrogenase (SDH), an enzyme complex (also referred to as respiratory complex II) that is a component of both the tricarboxylic acid (TCA) cycle and the mitochondrial electron transport chain, and which couples the oxidation of succinate to fumarate with the reduction of ubiquinone (coenzyme Q) to ubiquinol. Promotes maturation of the iron-sulfur protein subunit of the SDH catalytic dimer, protecting it from the deleterious effects of oxidants. May act together with SDHAF3. The protein is Succinate dehydrogenase assembly factor 1A, mitochondrial of Dictyostelium discoideum (Social amoeba).